Reading from the N-terminus, the 302-residue chain is ATP synthase subunit a (302 aa).

7 helical membrane-spanning segments follow: residues V61–G81, I119–I139, F148–V168, D172–I192, P214–A234, F252–W272, and A273–V293.

This sequence belongs to the ATPase A chain family. In terms of assembly, F-type ATPases have 2 components, CF(1) - the catalytic core - and CF(0) - the membrane proton channel. CF(1) has five subunits: alpha(3), beta(3), gamma(1), delta(1), epsilon(1). CF(0) has three main subunits: a(1), b(2) and c(9-12). The alpha and beta chains form an alternating ring which encloses part of the gamma chain. CF(1) is attached to CF(0) by a central stalk formed by the gamma and epsilon chains, while a peripheral stalk is formed by the delta and b chains.

The protein resides in the cell inner membrane. Key component of the proton channel; it plays a direct role in the translocation of protons across the membrane. In Alcanivorax borkumensis (strain ATCC 700651 / DSM 11573 / NCIMB 13689 / SK2), this protein is ATP synthase subunit a.